A 498-amino-acid chain; its full sequence is Sulfate adenylyltransferase subunit 1 (498 aa).

The tr-type G domain maps to 30-246 (TRPLRLITCG…LELATTRSAQ (217 aa)). The G1 stretch occupies residues 39 to 46 (GSVDDGKS). 39 to 46 (GSVDDGKS) lines the GTP pocket. The interval 97–101 (GITID) is G2. Residues 118 to 121 (DTPG) form a G3 region. GTP contacts are provided by residues 118–122 (DTPGH) and 173–176 (NKID). Residues 173 to 176 (NKID) form a G4 region. The G5 stretch occupies residues 210–212 (SAL).

It belongs to the TRAFAC class translation factor GTPase superfamily. Classic translation factor GTPase family. CysN/NodQ subfamily. Heterodimer composed of CysD, the smaller subunit, and CysN.

The enzyme catalyses sulfate + ATP + H(+) = adenosine 5'-phosphosulfate + diphosphate. It participates in sulfur metabolism; hydrogen sulfide biosynthesis; sulfite from sulfate: step 1/3. Its function is as follows. With CysD forms the ATP sulfurylase (ATPS) that catalyzes the adenylation of sulfate producing adenosine 5'-phosphosulfate (APS) and diphosphate, the first enzymatic step in sulfur assimilation pathway. APS synthesis involves the formation of a high-energy phosphoric-sulfuric acid anhydride bond driven by GTP hydrolysis by CysN coupled to ATP hydrolysis by CysD. The protein is Sulfate adenylyltransferase subunit 1 of Rhizobium meliloti (strain 1021) (Ensifer meliloti).